We begin with the raw amino-acid sequence, 407 residues long: Peptide chain release factor subunit 1 (407 aa).

This sequence belongs to the eukaryotic release factor 1 family. As to quaternary structure, heterodimer of two subunits, one of which binds GTP.

Its subcellular location is the cytoplasm. Directs the termination of nascent peptide synthesis (translation) in response to the termination codons UAA, UAG and UGA. This is Peptide chain release factor subunit 1 (prf1) from Archaeoglobus fulgidus (strain ATCC 49558 / DSM 4304 / JCM 9628 / NBRC 100126 / VC-16).